The following is a 354-amino-acid chain: Uroporphyrinogen decarboxylase (354 aa).

Substrate-binding positions include 27 to 31 (RQAGR), Phe46, Asp77, Tyr154, Thr209, and His327.

The protein belongs to the uroporphyrinogen decarboxylase family. In terms of assembly, homodimer.

It localises to the cytoplasm. It carries out the reaction uroporphyrinogen III + 4 H(+) = coproporphyrinogen III + 4 CO2. The protein operates within porphyrin-containing compound metabolism; protoporphyrin-IX biosynthesis; coproporphyrinogen-III from 5-aminolevulinate: step 4/4. Its function is as follows. Catalyzes the decarboxylation of four acetate groups of uroporphyrinogen-III to yield coproporphyrinogen-III. This is Uroporphyrinogen decarboxylase from Photorhabdus laumondii subsp. laumondii (strain DSM 15139 / CIP 105565 / TT01) (Photorhabdus luminescens subsp. laumondii).